Consider the following 610-residue polypeptide: tRNA uridine 5-carboxymethylaminomethyl modification enzyme MnmG (610 aa).

Residue Gly14 to Gly19 participates in FAD binding. Position 274 to 288 (Gly274 to Phe288) interacts with NAD(+).

This sequence belongs to the MnmG family. As to quaternary structure, homodimer. Heterotetramer of two MnmE and two MnmG subunits. FAD serves as cofactor.

It localises to the cytoplasm. Its function is as follows. NAD-binding protein involved in the addition of a carboxymethylaminomethyl (cmnm) group at the wobble position (U34) of certain tRNAs, forming tRNA-cmnm(5)s(2)U34. This Chlamydia trachomatis serovar A (strain ATCC VR-571B / DSM 19440 / HAR-13) protein is tRNA uridine 5-carboxymethylaminomethyl modification enzyme MnmG.